A 479-amino-acid chain; its full sequence is MKYQVVIGLEVHTQLTTNTKIFCGCSTRFGAEPNSQTCPVCLGLPGALPVLNRQVVEYAIRAGLATNCSITQRNVFARKNYFYPDLPKGYQISQFDLPICQHGHLDIDLEGERKRIGITRIHMEEDAGKLVHADIPGVDDSCVDLNRACTPLLEIVSEPDMRSPDEAIAYLKKLHQIVMYLGICDGNLEEGSFRCDANVSLMPVGSNVFGTRAELKNINSFKFIKQAIEYEIERQAEILDDGGKVIQETRLFDPNTGTTRSMRGKEEAHDYRYFPDPDLVPVIISDDWIERVRGELPELPEAKRARFMSELSLPEYDAEVLAASRELAQYFEDTFALFPQAKTVSNWVMGEVTRALNDDNNRSIAECPVTPALLADLLKLMEKGTISGKIAKTVFDEMYKTGKAPEKIVEEKGLVQVSDTGAIEAMIDEVLEKNAGQVAEYRGGKETLFGFFVGQVMRASKGKANPGVVNEMLLKKLQG.

It belongs to the GatB/GatE family. GatB subfamily. As to quaternary structure, heterotrimer of A, B and C subunits.

The enzyme catalyses L-glutamyl-tRNA(Gln) + L-glutamine + ATP + H2O = L-glutaminyl-tRNA(Gln) + L-glutamate + ADP + phosphate + H(+). The catalysed reaction is L-aspartyl-tRNA(Asn) + L-glutamine + ATP + H2O = L-asparaginyl-tRNA(Asn) + L-glutamate + ADP + phosphate + 2 H(+). Its function is as follows. Allows the formation of correctly charged Asn-tRNA(Asn) or Gln-tRNA(Gln) through the transamidation of misacylated Asp-tRNA(Asn) or Glu-tRNA(Gln) in organisms which lack either or both of asparaginyl-tRNA or glutaminyl-tRNA synthetases. The reaction takes place in the presence of glutamine and ATP through an activated phospho-Asp-tRNA(Asn) or phospho-Glu-tRNA(Gln). In Geobacter sp. (strain M21), this protein is Aspartyl/glutamyl-tRNA(Asn/Gln) amidotransferase subunit B.